The primary structure comprises 179 residues: Large ribosomal subunit protein uL5 (179 aa).

The protein belongs to the universal ribosomal protein uL5 family. Part of the 50S ribosomal subunit; part of the 5S rRNA/L5/L18/L25 subcomplex. Contacts the 5S rRNA and the P site tRNA. Forms a bridge to the 30S subunit in the 70S ribosome.

Functionally, this is one of the proteins that bind and probably mediate the attachment of the 5S RNA into the large ribosomal subunit, where it forms part of the central protuberance. In the 70S ribosome it contacts protein S13 of the 30S subunit (bridge B1b), connecting the 2 subunits; this bridge is implicated in subunit movement. Contacts the P site tRNA; the 5S rRNA and some of its associated proteins might help stabilize positioning of ribosome-bound tRNAs. The chain is Large ribosomal subunit protein uL5 from Geobacillus kaustophilus (strain HTA426).